The following is a 383-amino-acid chain: MAKHLFTSESVSEGHPDKIADQISDAVLDAILEQDPKARVACETYVKTGMVLVGGEITTSAWVDIEEITRRTVRDIGYVNSEMGFDANSCAVLSAIGKQSPDINQGVDRRDPLEQGAGDQGLMFGYATNETDVLMPAPVTYAHRLVQRQSEVRKSGSLPWLRPDAKSQVTFLYDDGKIAGIDAVVLSTQHSEEISQKDLHEAVMEEIIKPVLPAEWLSANTKYFINPTGRFVIGGPMGDCGLTGRKIIVDTYGGAARHGGGAFSGKDPSKVDRSAAYAARYVAKNIVAAGLADRCEIQVSYAIGVAEPTSIMIETFGTEKVSTEQLTLLVREFFDLRPYGLIQMLDLLHPIYQETAAYGHFGREHFPWEKTDKAAQLREAAGL.

Histidine 15 contacts ATP. Aspartate 17 is a binding site for Mg(2+). Glutamate 43 is a binding site for K(+). L-methionine-binding residues include glutamate 56 and glutamine 99. A flexible loop region spans residues 99 to 109 (QSPDINQGVDR). Residues 164-166 (DAK), 230-231 (RF), aspartate 239, 245-246 (RK), alanine 262, and lysine 266 each bind ATP. Aspartate 239 is a binding site for L-methionine. Lysine 270 contributes to the L-methionine binding site.

This sequence belongs to the AdoMet synthase family. As to quaternary structure, homotetramer; dimer of dimers. The cofactor is Mg(2+). It depends on K(+) as a cofactor.

The protein resides in the cytoplasm. It carries out the reaction L-methionine + ATP + H2O = S-adenosyl-L-methionine + phosphate + diphosphate. Its pathway is amino-acid biosynthesis; S-adenosyl-L-methionine biosynthesis; S-adenosyl-L-methionine from L-methionine: step 1/1. Its function is as follows. Catalyzes the formation of S-adenosylmethionine (AdoMet) from methionine and ATP. The overall synthetic reaction is composed of two sequential steps, AdoMet formation and the subsequent tripolyphosphate hydrolysis which occurs prior to release of AdoMet from the enzyme. This chain is S-adenosylmethionine synthase, found in Pectobacterium carotovorum subsp. carotovorum (strain PC1).